A 97-amino-acid chain; its full sequence is Secreted Ly-6/uPAR domain-containing protein 2 (97 aa).

An N-terminal signal peptide occupies residues 1 to 22; sequence MQLGTGLLLAAVLSLQLAAAEA. 5 disulfides stabilise this stretch: Cys25/Cys47, Cys28/Cys34, Cys40/Cys68, Cys72/Cys88, and Cys89/Cys94. The UPAR/Ly6 domain maps to 25–95; sequence CHQCTGFGGC…IACCQTSLCN (71 aa).

Interacts with CHRNA3, CHRNA4, CHRNA5, CHRNA7, CHRNB2 and CHRNB4. Interacts with CHRM1 and CHRM3 probably in an allosteric manner. In terms of tissue distribution, expressed at highest levels in cervix and esophagus, followed by adult and fetal skin. Expressed at lower levels in brain, lung, stomach, small intestine, colon, rectum, uterus, and thymus. Not detected in spleen nor bone marrow. Up-regulated 3-fold in psoriatic lesional skin. In the epidermis, predominantly produced by keratinocytes of the suprabasal epidermal compartment (at protein level). In attached gingiva, produced at highest levels by basal cells located in the lowermost epithelial layers (at protein level). Detected in serum (at protein level).

It is found in the secreted. Its function is as follows. Binds and may modulate the functional properties of nicotinic and muscarinic acetylcholine receptors. May regulate keratinocytes proliferation, differentiation and apoptosis. In vitro moderately inhibits ACh-evoked currents of alpha-3:beta-2-containing nAChRs and strongly these of alpha-4:beta-2-containing nAChRs, modulates alpha-7-containing nAChRs, and inhibits nicotine-induced signaling probably implicating alpha-3:beta-4-containing nAChRs. Proposed to act on alpha-3:beta-2 and alpha-7 nAChRs in an orthosteric, and on mAChRs, such as CHRM1 and CHRM3, in an allosteric manner. The polypeptide is Secreted Ly-6/uPAR domain-containing protein 2 (Homo sapiens (Human)).